The sequence spans 155 residues: DNA-directed RNA polymerases I, II, and III subunit RPABC2 (155 aa).

Acidic residues predominate over residues 1–19 (MSDYEEAFNDGNENFEDFD). The interval 1–57 (MSDYEEAFNDGNENFEDFDVEHFSDEETYEEKPQFKDGETTDANGKTIVTGGNGPED) is disordered. Residues 20–39 (VEHFSDEETYEEKPQFKDGE) are compositionally biased toward basic and acidic residues. A Phosphoserine modification is found at S24. A leucine-zipper region spans residues 111–132 (LEGETDPLRIAMKELAEKKIPL).

This sequence belongs to the archaeal Rpo6/eukaryotic RPB6 RNA polymerase subunit family. As to quaternary structure, component of the RNA polymerase I (Pol I), RNA polymerase II (Pol II) and RNA polymerase III (Pol III) complexes. Component of the RNA polymerase I (Pol I) complex consisting of 14 subunits: RPA135, RPA190, RPC40, RPA14, RPB5, RPO26, RPA43, RPB8, RPA12, RPB10, RPC19, RPC10, RPA49 and RPA34. The complex is composed of a horseshoe-shaped core containing ten subunits (RPA135, RPA190, RPB5, RPO26, RPB8, RPB10, RPC10, RPA12, RPC19 and RPC40) where RPA135 and RPA190 form the DNA-binding cleft. Outside of the core, RPA14 and RPA43 form the stalk that mediates interactions with transcription initiation factors and newly synthesized RNA. Component of the RNA polymerase II (Pol II) complex consisting of 12 subunits: RPO21, RPB2, RPB3, RPB4, RPB5, RPO26, RPB7, RPB8, RPB9, RPB10 and RPC10. Component of the RNA polymerase III (Pol III) complex consisting of 17 subunits.

The protein resides in the cytoplasm. The protein localises to the nucleus. Functionally, DNA-dependent RNA polymerases catalyze the transcription of DNA into RNA using the four ribonucleoside triphosphates as substrates. Common component of RNA polymerases I, II and III which synthesize ribosomal RNA precursors, mRNA precursors and many functional non-coding RNAs, and small RNAs, such as 5S rRNA and tRNAs, respectively. Pol II is the central component of the basal RNA polymerase II transcription machinery. RNA polymerases are composed of mobile elements that move relative to each other. In Pol II, RPB6 is part of the clamp element and together with parts of RPB1 and RPB2 forms a pocket to which the RPB4-RPB7 subcomplex binds. In Saccharomyces cerevisiae (strain ATCC 204508 / S288c) (Baker's yeast), this protein is DNA-directed RNA polymerases I, II, and III subunit RPABC2 (RPO26).